Reading from the N-terminus, the 365-residue chain is MDFETQVVLHNLKKSVEVIRRQLDIEKKHSRLEEIQALVDSPTLWEDQSRAQLLLKEKSQIETSLKEFKELSIQLDDLIEMIELASKDHEEETMKDLERELLLLKEKIQKKEIECLFSGEADGNDCLLEIQSGAGGTESNDWAMMLLRMYTRWAEIYHKFQVQIVDKVEGEETGIKSCTLKVMGKNAYGWARTETGVHRLVRISPFDANAKRHTSFAKIFVSPCIEGEINISIDEKDLKIDTYRASGAGGQHVNKTESAIRITHLPSKIVVQSQSSRSQHQNKAEAMQMLKSRLYEIELRKKEEKLNAARNVEDSIGWGYQIRSYVLHPYQMIKDLRTGHEVGNITSVLDGDLDSFIIATISNNS.

Q251 carries the post-translational modification N5-methylglutamine.

It belongs to the prokaryotic/mitochondrial release factor family. In terms of processing, methylated by PrmC. Methylation increases the termination efficiency of RF2.

It is found in the cytoplasm. Its function is as follows. Peptide chain release factor 2 directs the termination of translation in response to the peptide chain termination codons UGA and UAA. This is Peptide chain release factor 2 from Neorickettsia sennetsu (strain ATCC VR-367 / Miyayama) (Ehrlichia sennetsu).